Consider the following 163-residue polypeptide: Nucleotide-binding protein tll0793 (163 aa).

The protein belongs to the YajQ family.

Its function is as follows. Nucleotide-binding protein. This is Nucleotide-binding protein tll0793 from Thermosynechococcus vestitus (strain NIES-2133 / IAM M-273 / BP-1).